The following is a 122-amino-acid chain: Large ribosomal subunit protein uL18 (122 aa).

The protein belongs to the universal ribosomal protein uL18 family. As to quaternary structure, part of the 50S ribosomal subunit; part of the 5S rRNA/L5/L18/L25 subcomplex. Contacts the 5S and 23S rRNAs.

Functionally, this is one of the proteins that bind and probably mediate the attachment of the 5S RNA into the large ribosomal subunit, where it forms part of the central protuberance. The protein is Large ribosomal subunit protein uL18 of Synechococcus sp. (strain JA-2-3B'a(2-13)) (Cyanobacteria bacterium Yellowstone B-Prime).